Reading from the N-terminus, the 172-residue chain is uncharacterized protein (172 aa).

The Ferritin-like diiron domain maps to 1–148 (MANSQKVIDV…TIHDFFENGN (148 aa)).

This is an uncharacterized protein from Ureaplasma urealyticum (Ureaplasma urealyticum biotype 2).